Consider the following 102-residue polypeptide: Large ribosomal subunit protein uL24 (102 aa).

This sequence belongs to the universal ribosomal protein uL24 family. Part of the 50S ribosomal subunit.

In terms of biological role, one of two assembly initiator proteins, it binds directly to the 5'-end of the 23S rRNA, where it nucleates assembly of the 50S subunit. Its function is as follows. One of the proteins that surrounds the polypeptide exit tunnel on the outside of the subunit. The protein is Large ribosomal subunit protein uL24 of Agrobacterium fabrum (strain C58 / ATCC 33970) (Agrobacterium tumefaciens (strain C58)).